Reading from the N-terminus, the 533-residue chain is Probable anion transporter 4, chloroplastic (533 aa).

The next 12 helical transmembrane spans lie at 117–137, 152–172, 179–199, 203–223, 243–263, 267–287, 342–362, 376–396, 417–437, 438–458, 474–494, and 502–522; these read MLAL…VAIV, IVQS…GTLV, VVMA…PWAA, LWAL…ALPC, IAMA…PILM, GIYG…LVWL, VIVA…WMPI, AWFS…AGFW, IGFI…QPLV, ASAW…GFLI, MCLT…GFFV, and GFIL…NIYA.

The protein belongs to the major facilitator superfamily. Sodium/anion cotransporter (TC 2.A.1.14) family. As to expression, expressed in leaf veins and root tips.

The protein localises to the plastid. It is found in the chloroplast membrane. Its function is as follows. Inorganic phosphate and probable anion transporter. The sequence is that of Probable anion transporter 4, chloroplastic (ANTR4) from Arabidopsis thaliana (Mouse-ear cress).